A 134-amino-acid chain; its full sequence is DNA-directed RNA polymerase subunit omega (134 aa).

Positions 76-102 (EVDEPEPDPASMIAAGGAAAADSEEQD) are disordered.

The protein belongs to the RNA polymerase subunit omega family. The RNAP catalytic core consists of 2 alpha, 1 beta, 1 beta' and 1 omega subunit. When a sigma factor is associated with the core the holoenzyme is formed, which can initiate transcription.

It carries out the reaction RNA(n) + a ribonucleoside 5'-triphosphate = RNA(n+1) + diphosphate. Promotes RNA polymerase assembly. Latches the N- and C-terminal regions of the beta' subunit thereby facilitating its interaction with the beta and alpha subunits. The chain is DNA-directed RNA polymerase subunit omega from Rhizobium etli (strain ATCC 51251 / DSM 11541 / JCM 21823 / NBRC 15573 / CFN 42).